A 102-amino-acid chain; its full sequence is Chorion protein S15 (102 aa).

Residues 1 to 18 (MKFLIAFVAIAFFACVSA) form the signal peptide.

The protein belongs to the chorion protein S15/S18 family.

It is found in the secreted. Its function is as follows. Chorion membrane (egg shell) protein; plays a role in protecting the egg from the environment. The polypeptide is Chorion protein S15 (Cp15) (Drosophila grimshawi (Hawaiian fruit fly)).